Here is a 702-residue protein sequence, read N- to C-terminus: Kinesin-like protein KIF3A (702 aa).

The Kinesin motor domain maps to 14–345; the sequence is NVKVVVRCRP…LRYANRAKNI (332 aa). 100-107 provides a ligand contact to ATP; the sequence is GQTGTGKT. The stretch at 355 to 593 forms a coiled coil; it reads PKDALLRQFQ…LSRELRLQML (239 aa). Disordered regions lie at residues 372 to 424 and 667 to 702; these read KKLE…KMIE and LMKL…SLLQ. The span at 376–400 shows a compositional bias: acidic residues; it reads EGEEISGSDISGSEEDDDEEGEVGE. The span at 410–424 shows a compositional bias: basic and acidic residues; sequence DQAGKKKVSPDKMIE. The tract at residues 600–702 is globular; it reads PRDYQEMIEN…PETVIDSLLQ (103 aa). The span at 675–690 shows a compositional bias: basic residues; the sequence is TSKGKARPKTGRRKRS. Ser690 carries the phosphoserine modification.

This sequence belongs to the TRAFAC class myosin-kinesin ATPase superfamily. Kinesin family. Kinesin II subfamily. In terms of assembly, heterodimer of KIF3A and KIF3B. Interacts with CIMAP3. Interacts with CLN3. Interacts with DCTN1. Interacts with FLCN. Interacts with AP3B1.

It is found in the cytoplasm. It localises to the cytoskeleton. Its subcellular location is the cell projection. The protein localises to the cilium. The protein resides in the microtubule organizing center. It is found in the centrosome. It localises to the centriole. Functionally, microtubule-based anterograde translocator for membranous organelles. Plus end-directed microtubule sliding activity in vitro. Plays a role in primary cilia formation. Plays a role in centriole cohesion and subdistal appendage organization and function. Regulates the formation of the subdistal appendage via recruitment of DCTN1 to the centriole. Also required for ciliary basal feet formation and microtubule anchoring to mother centriole. This Macaca fascicularis (Crab-eating macaque) protein is Kinesin-like protein KIF3A (KIF3A).